The chain runs to 234 residues: Phosphoribosylaminoimidazole-succinocarboxamide synthase (234 aa).

Belongs to the SAICAR synthetase family.

It catalyses the reaction 5-amino-1-(5-phospho-D-ribosyl)imidazole-4-carboxylate + L-aspartate + ATP = (2S)-2-[5-amino-1-(5-phospho-beta-D-ribosyl)imidazole-4-carboxamido]succinate + ADP + phosphate + 2 H(+). Its pathway is purine metabolism; IMP biosynthesis via de novo pathway; 5-amino-1-(5-phospho-D-ribosyl)imidazole-4-carboxamide from 5-amino-1-(5-phospho-D-ribosyl)imidazole-4-carboxylate: step 1/2. The protein is Phosphoribosylaminoimidazole-succinocarboxamide synthase of Clostridium botulinum (strain Okra / Type B1).